Reading from the N-terminus, the 198-residue chain is Probable GTP-binding protein EngB (198 aa).

In terms of domain architecture, EngB-type G spans 27 to 198 (DLPEVALAGR…ESWDTILSEL (172 aa)). Residues 35-42 (GRSNVGKS), 62-66 (GKTQL), 80-83 (DVPG), 147-150 (TKAD), and 179-181 (FSS) contribute to the GTP site. Mg(2+) contacts are provided by Ser-42 and Thr-64.

This sequence belongs to the TRAFAC class TrmE-Era-EngA-EngB-Septin-like GTPase superfamily. EngB GTPase family. Mg(2+) serves as cofactor.

Its function is as follows. Necessary for normal cell division and for the maintenance of normal septation. The polypeptide is Probable GTP-binding protein EngB (Streptococcus agalactiae serotype Ia (strain ATCC 27591 / A909 / CDC SS700)).